Here is a 174-residue protein sequence, read N- to C-terminus: Secretory-abundant heat soluble protein 68234 (174 aa).

An N-terminal signal peptide occupies residues 1–19 (MARFLVALALFGVVAMTAA). Residues 26 to 57 (EWSGKPWLGKFVAEVTDKSENWEAFVDALGLP) form an SAHS-c1 region. An SAHS-c2 region spans residues 72-100 (YKQGDHYHHIFALPDKNFEKDIEFTLGQE). Residues 113 to 162 (KYSEDGEKLVADVSIPTKGKTIRSEYEVQGDQLIKTYKTGDIVAKKWFKK) form an SAHS-c3 region.

It belongs to the Secretory-abundant heat soluble protein (SAHS) family.

It localises to the secreted. In terms of biological role, secreted heat soluble protein acting as a molecular shield in water-deficient condition. Tardigrade-specific intrinsically disordered proteins (TDPs) are essential for desiccation tolerance by forming non-crystalline amorphous solids upon desiccation, and this vitrified state mirrors their protective capabilities. The protein is Secretory-abundant heat soluble protein 68234 of Hypsibius exemplaris (Freshwater tardigrade).